We begin with the raw amino-acid sequence, 139 residues long: ATP synthase epsilon chain (139 aa).

This sequence belongs to the ATPase epsilon chain family. In terms of assembly, F-type ATPases have 2 components, CF(1) - the catalytic core - and CF(0) - the membrane proton channel. CF(1) has five subunits: alpha(3), beta(3), gamma(1), delta(1), epsilon(1). CF(0) has three main subunits: a, b and c.

Its subcellular location is the cell inner membrane. Functionally, produces ATP from ADP in the presence of a proton gradient across the membrane. The protein is ATP synthase epsilon chain of Serratia proteamaculans (strain 568).